Reading from the N-terminus, the 288-residue chain is Diaminopimelate epimerase (288 aa).

Residues asparagine 14 and asparagine 67 each coordinate substrate. Cysteine 76 functions as the Proton donor in the catalytic mechanism. Substrate contacts are provided by residues 77-78 (GN), asparagine 166, asparagine 199, and 217-218 (ER). Cysteine 226 serves as the catalytic Proton acceptor. 227–228 (GT) contacts substrate.

It belongs to the diaminopimelate epimerase family. As to quaternary structure, homodimer.

The protein resides in the cytoplasm. The catalysed reaction is (2S,6S)-2,6-diaminopimelate = meso-2,6-diaminopimelate. It functions in the pathway amino-acid biosynthesis; L-lysine biosynthesis via DAP pathway; DL-2,6-diaminopimelate from LL-2,6-diaminopimelate: step 1/1. Its function is as follows. Catalyzes the stereoinversion of LL-2,6-diaminopimelate (L,L-DAP) to meso-diaminopimelate (meso-DAP), a precursor of L-lysine and an essential component of the bacterial peptidoglycan. This chain is Diaminopimelate epimerase, found in Bacillus cereus (strain B4264).